A 213-amino-acid polypeptide reads, in one-letter code: MSAEILNPNLRRVVLASNNAGKLREFSALFAPLGIELVPQSELGVSEAAEPHATFVENALAKARHASRHTGLPALADDSGLCVVALGGAPGVHSARYAQQPGGARSDAANNALLVRELAAAGDRRAWYVALLALVRTENDPCPLIGEGLWHGEIVDAPAGEHGFGYDPHFYLPQQGCTAAQLAPEHKNRISHRAQALAQLLDKLRATGPVDRP.

17–22 (SNNAGK) serves as a coordination point for substrate. The active-site Proton acceptor is Asp78. A Mg(2+)-binding site is contributed by Asp78. Residues Ser79, 164–167 (FGYD), Lys187, and 192–193 (HR) each bind substrate.

The protein belongs to the HAM1 NTPase family. In terms of assembly, homodimer. It depends on Mg(2+) as a cofactor.

The enzyme catalyses XTP + H2O = XMP + diphosphate + H(+). It carries out the reaction dITP + H2O = dIMP + diphosphate + H(+). It catalyses the reaction ITP + H2O = IMP + diphosphate + H(+). Its function is as follows. Pyrophosphatase that catalyzes the hydrolysis of nucleoside triphosphates to their monophosphate derivatives, with a high preference for the non-canonical purine nucleotides XTP (xanthosine triphosphate), dITP (deoxyinosine triphosphate) and ITP. Seems to function as a house-cleaning enzyme that removes non-canonical purine nucleotides from the nucleotide pool, thus preventing their incorporation into DNA/RNA and avoiding chromosomal lesions. In Bordetella parapertussis (strain 12822 / ATCC BAA-587 / NCTC 13253), this protein is dITP/XTP pyrophosphatase.